Reading from the N-terminus, the 434-residue chain is V-type ATP synthase beta chain (434 aa).

Belongs to the ATPase alpha/beta chains family.

Produces ATP from ADP in the presence of a proton gradient across the membrane. The V-type beta chain is a regulatory subunit. This chain is V-type ATP synthase beta chain, found in Borrelia garinii subsp. bavariensis (strain ATCC BAA-2496 / DSM 23469 / PBi) (Borreliella bavariensis).